The following is a 622-amino-acid chain: Palmitoyltransferase ZDHHC13 (622 aa).

N-acetylmethionine is present on Met-1. The Cytoplasmic portion of the chain corresponds to 1 to 291 (MEGPGLGSQC…RLWRWLQKCE (291 aa)). ANK repeat units follow at residues 43 to 78 (PLIE…VRQP), 81 to 110 (ENVS…VVDQ), 115 to 144 (LNST…DPTL), 148 to 177 (EGFS…SVNM), 181 to 211 (NGQT…SLNV), 216 to 245 (HQNT…SLDI), and 249 to 277 (KGET…KMRA). The helical transmembrane segment at 292-312 (LFLLLMLSVITMWAIGYILDF) threads the bilayer. The Lumenal portion of the chain corresponds to 313–320 (NSDSWLLK). A helical membrane pass occupies residues 321-341 (GCLLVTLFFLTSLFPRFLVGY). The Cytoplasmic segment spans residues 342–347 (KNLVYL). A helical membrane pass occupies residues 348 to 368 (PTAFLLSSVFWIFMTWFILFF). The Lumenal portion of the chain corresponds to 369 to 370 (PD). Residues 371-391 (LAGAPFYFSFIFSIVAFLYFF) form a helical membrane-spanning segment. Residues 392-470 (YKTWATDPGF…RCIGFGNHHY (79 aa)) lie on the Cytoplasmic side of the membrane. Residues 426–476 (TFCTSCLIRKPLRSLHCHVCNCCVARYDQHCLWTGRCIGFGNHHYYIFFLF) enclose the DHHC domain. The active-site S-palmitoyl cysteine intermediate is the Cys-456. The chain crosses the membrane as a helical span at residues 471-491 (YIFFLFFLSMVCGWIIYGSFI). Topologically, residues 492–518 (YLSSHCATTFKEDGLWTYLNQIVACSP) are lumenal. Residues 519–539 (WVLYILMLATFHFSWSTFLLL) traverse the membrane as a helical segment. Residues 540–622 (NQLFQIAFLG…PAREKVLRSV (83 aa)) lie on the Cytoplasmic side of the membrane.

Belongs to the DHHC palmitoyltransferase family. AKR/ZDHHC17 subfamily. In terms of assembly, interacts (via ANK repeats) with CLIP3. Interacts (via ANK repeats) with DNAJC5 (via C-terminus). Interacts (via ANK repeats) with HTT. Interacts (via ANK repeats) with MAP6. Interacts (via ANK repeats) with SNAP23. Interacts (via ANK repeats) with SNAP25. May interact (via ANK repeats) with SPRED2.

It is found in the golgi apparatus membrane. The protein localises to the cytoplasmic vesicle membrane. It carries out the reaction L-cysteinyl-[protein] + hexadecanoyl-CoA = S-hexadecanoyl-L-cysteinyl-[protein] + CoA. Functionally, palmitoyltransferase that could catalyze the addition of palmitate onto various protein substrates. Palmitoyltransferase for HTT and GAD2. May play a role in Mg(2+) transport. The chain is Palmitoyltransferase ZDHHC13 from Homo sapiens (Human).